Reading from the N-terminus, the 396-residue chain is Chalcone synthase B (396 aa).

The active site involves C170.

The protein belongs to the thiolase-like superfamily. Chalcone/stilbene synthases family.

The enzyme catalyses (E)-4-coumaroyl-CoA + 3 malonyl-CoA + 3 H(+) = 2',4,4',6'-tetrahydroxychalcone + 3 CO2 + 4 CoA. It functions in the pathway secondary metabolite biosynthesis; flavonoid biosynthesis. Its function is as follows. The primary product of this enzyme is 4,2',4',6'-tetrahydroxychalcone (also termed naringenin-chalcone or chalcone) which can under specific conditions spontaneously isomerize into naringenin. This chain is Chalcone synthase B (CHSB), found in Ipomoea purpurea (Common morning glory).